Consider the following 374-residue polypeptide: Queuine tRNA-ribosyltransferase (374 aa).

Asp-89 acts as the Proton acceptor in catalysis. Residues 89-93 (DSGGF), Asp-143, Gln-185, and Gly-212 contribute to the substrate site. Residues 243–249 (GVGKPED) are RNA binding. Asp-262 acts as the Nucleophile in catalysis. Residues 267-271 (TRNAR) are RNA binding; important for wobble base 34 recognition. 4 residues coordinate Zn(2+): Cys-300, Cys-302, Cys-305, and His-331.

This sequence belongs to the queuine tRNA-ribosyltransferase family. Homodimer. Within each dimer, one monomer is responsible for RNA recognition and catalysis, while the other monomer binds to the replacement base PreQ1. Zn(2+) serves as cofactor.

It catalyses the reaction 7-aminomethyl-7-carbaguanine + guanosine(34) in tRNA = 7-aminomethyl-7-carbaguanosine(34) in tRNA + guanine. Its pathway is tRNA modification; tRNA-queuosine biosynthesis. In terms of biological role, catalyzes the base-exchange of a guanine (G) residue with the queuine precursor 7-aminomethyl-7-deazaguanine (PreQ1) at position 34 (anticodon wobble position) in tRNAs with GU(N) anticodons (tRNA-Asp, -Asn, -His and -Tyr). Catalysis occurs through a double-displacement mechanism. The nucleophile active site attacks the C1' of nucleotide 34 to detach the guanine base from the RNA, forming a covalent enzyme-RNA intermediate. The proton acceptor active site deprotonates the incoming PreQ1, allowing a nucleophilic attack on the C1' of the ribose to form the product. After dissociation, two additional enzymatic reactions on the tRNA convert PreQ1 to queuine (Q), resulting in the hypermodified nucleoside queuosine (7-(((4,5-cis-dihydroxy-2-cyclopenten-1-yl)amino)methyl)-7-deazaguanosine). This is Queuine tRNA-ribosyltransferase from Saccharophagus degradans (strain 2-40 / ATCC 43961 / DSM 17024).